A 64-amino-acid chain; its full sequence is Cytotoxin homolog S4C8 (64 aa).

4 disulfide bridges follow: Cys-3–Cys-22, Cys-15–Cys-40, Cys-44–Cys-56, and Cys-57–Cys-62.

The protein belongs to the three-finger toxin family. Short-chain subfamily. Orphan group XIII sub-subfamily. In terms of tissue distribution, expressed by the venom gland.

It is found in the secreted. The polypeptide is Cytotoxin homolog S4C8 (Aspidelaps scutatus (Shield-nose snake)).